Here is an 810-residue protein sequence, read N- to C-terminus: Hemoglobin-haptoglobin utilization protein B (810 aa).

The first 22 residues, 1 to 22, serve as a signal peptide directing secretion; the sequence is MPIPFKPVLAAAAIAQAFPAFA. The 133-residue stretch at 34-166 folds into the TBDR plug domain; the sequence is NEITVTGTHK…LGGAVNYQTK (133 aa). In terms of domain architecture, TBDR beta-barrel spans 175 to 810; sequence DKPYHLGIKG…SYNFTIEAKF (636 aa). A TonB C-terminal box motif is present at residues 793–810; that stretch reads QRFTSPGRSYNFTIEAKF.

This sequence belongs to the TonB-dependent receptor family.

The protein resides in the cell outer membrane. Its function is as follows. Acts as a receptor for hemoglobin or the hemoglobin/haptoglobin complex and is required for heme uptake. This Neisseria meningitidis serogroup A / serotype 4A (strain DSM 15465 / Z2491) protein is Hemoglobin-haptoglobin utilization protein B (hpuB).